A 90-amino-acid polypeptide reads, in one-letter code: Large ribosomal subunit protein bL27 (90 aa).

This sequence belongs to the bacterial ribosomal protein bL27 family.

The polypeptide is Large ribosomal subunit protein bL27 (Rhodopseudomonas palustris (strain BisB5)).